The primary structure comprises 369 residues: Phospho-N-acetylmuramoyl-pentapeptide-transferase (369 aa).

Helical transmembrane passes span 2–22, 55–75, 86–106, 120–140, 163–183, 196–216, 239–259, 266–286, 291–311, and 348–368; these read IALL…TPLF, TVVV…MWMM, GLLL…DDFI, AKLI…LQFP, LAFG…NLII, LDGL…IMGI, PMDL…FLWW, IFMG…FAIL, LLLA…IIQV, and ILAG…WVVL.

This sequence belongs to the glycosyltransferase 4 family. MraY subfamily. Mg(2+) serves as cofactor.

It localises to the cell membrane. The catalysed reaction is UDP-N-acetyl-alpha-D-muramoyl-L-alanyl-gamma-D-glutamyl-meso-2,6-diaminopimeloyl-D-alanyl-D-alanine + di-trans,octa-cis-undecaprenyl phosphate = di-trans,octa-cis-undecaprenyl diphospho-N-acetyl-alpha-D-muramoyl-L-alanyl-D-glutamyl-meso-2,6-diaminopimeloyl-D-alanyl-D-alanine + UMP. It participates in cell wall biogenesis; peptidoglycan biosynthesis. Its function is as follows. Catalyzes the initial step of the lipid cycle reactions in the biosynthesis of the cell wall peptidoglycan: transfers peptidoglycan precursor phospho-MurNAc-pentapeptide from UDP-MurNAc-pentapeptide onto the lipid carrier undecaprenyl phosphate, yielding undecaprenyl-pyrophosphoryl-MurNAc-pentapeptide, known as lipid I. The polypeptide is Phospho-N-acetylmuramoyl-pentapeptide-transferase (Paenarthrobacter aurescens (strain TC1)).